A 745-amino-acid polypeptide reads, in one-letter code: Poly(A) polymerase alpha (745 aa).

A compositionally biased stretch (low complexity) spans 1-17 (MPFPVTTQGSQQTQPPQ). The interval 1 to 22 (MPFPVTTQGSQQTQPPQKHYGI) is disordered. Phosphoserine occurs at positions 10 and 24. ATP-binding positions include 100 to 102 (FGS), threonine 109, 113 to 115 (DID), aspartate 167, lysine 228, tyrosine 237, and 246 to 247 (GV). The Mg(2+) site is built by aspartate 113, aspartate 115, and aspartate 167. Glycyl lysine isopeptide (Lys-Gly) (interchain with G-Cter in SUMO) cross-links involve residues lysine 444, lysine 445, lysine 506, and lysine 507. The Nuclear localization signal 1 motif lies at 490–507 (RKQLHQLLPNHVLQKKKK). A ser/Thr-rich region spans residues 508–643 (HSTEGVKLTA…TSGNAATKIP (136 aa)). Residues 523 to 534 (LDLSMDSDNSMS) show a composition bias toward low complexity. 2 disordered regions span residues 523 to 565 (LDLS…AVTA) and 577 to 704 (SVPQ…SETI). Residues 535–557 (VPSPTSATKTSPLNSSGSSQGRN) show a composition bias toward polar residues. Phosphoserine occurs at positions 537 and 558. Low complexity-rich tracts occupy residues 583-594 (SSESSGGTSSES) and 611-640 (TVSRVVSSTRLVNPPPRSSGNAATSGNAAT). 2 positions are modified to N6-acetyllysine: lysine 641 and lysine 650. The Nuclear localization signal 2 signature appears at 650-665 (KRTSSPHKEESPKKTK). 2 stretches are compositionally biased toward basic and acidic residues: residues 655 to 666 (PHKEESPKKTKT) and 682 to 692 (GHDKTEAKEQL). Residues 677–745 (CLALSGHDKT…KNSIKLRLNR (69 aa)) are required for interaction with NUDT21. Residues 694-704 (TETSTTQSETI) are compositionally biased toward low complexity. Lysine 736 is subject to N6-acetyllysine; alternate. Residue lysine 736 forms a Glycyl lysine isopeptide (Lys-Gly) (interchain with G-Cter in SUMO); alternate linkage. Serine 738 carries the phosphoserine modification. The residue at position 740 (lysine 740) is an N6-acetyllysine; alternate. Lysine 740 is covalently cross-linked (Glycyl lysine isopeptide (Lys-Gly) (interchain with G-Cter in SUMO); alternate).

This sequence belongs to the poly(A) polymerase family. As to quaternary structure, monomer. Found in a complex with CPSF1, FIP1L1 and PAPOLA. Interacts with AHCYL1 and FIP1L1; the interaction with AHCYL1 seems to increase interaction with FIP1L1. Interacts with NUDT21; the interaction is diminished by acetylation. Interacts with KPNB1; the interaction promotes PAP nuclear import and is inhibited by acetylation of PAP. Requires Mg(2+) as cofactor. It depends on Mn(2+) as a cofactor. In terms of processing, polysumoylated. Varying sumoylation depending on tissue- and cell-type. Highly sumoylated in bladder and NIH 3T3 cells. Sumoylation is required for nuclear localization and enhances PAP stability. Desumoylated by SENP1. Inhibits polymerase activity. Post-translationally, hyperphosphorylation on multiple CDK2 consensus and non-consensus sites in the C-terminal Ser/Thr-rich region represses PAP activity in late M-phase. Phosphorylation/dephosphorylation may regulate the interaction between PAP and CPSF. Acetylated in the C-terminus. Acetylation decreases interaction with NUDT21 and KPNB1, and inhibits nuclear localization through inhibiting binding to the importin alpha/beta complex.

The protein localises to the cytoplasm. It localises to the nucleus. It catalyses the reaction RNA(n) + ATP = RNA(n)-3'-adenine ribonucleotide + diphosphate. In terms of biological role, polymerase that creates the 3'-poly(A) tail of mRNA's. Also required for the endoribonucleolytic cleavage reaction at some polyadenylation sites. May acquire specificity through interaction with a cleavage and polyadenylation specificity factor (CPSF) at its C-terminus. The polypeptide is Poly(A) polymerase alpha (PAPOLA) (Homo sapiens (Human)).